The chain runs to 520 residues: MVRGIIRIASLASVSLSSSGFFLYGTGYWDPSDFGVVRIGRAVLTTAAITWDYFTKLRHVEAGTEEYENIKSQVHLRSAHRLLDLCCFNRGTFIKVGQHLAALEYLVPPEYTKTLSVLHSQAPCTPFTDVVQVIREDLGKEISEVFEEFEKTPLGAASLAQVHRAVLQDGRKVAVKVQHPKVQAQSSRDILIMEVLLHVVKKIFPQFEFMWLIEEAKKNLPLELDFQNEGRNAEKMSSIVSSFSFLRIPRIYWELSTKRVLVMEYMEGGQVNDREYMKRNQIDVNKVSHALGKLYSEMIFVHGFVHCDPHPGNVLVRQNPENCAPEIILLDHGLYQVLTESFRLDYCSLWQALIAADKERIRIYSQRLGAGELYPLFACMLTARSWESVNRGIYENTVSKEEIHEIRSNAATYLPEISQLLASVPRQMLLLLKTNDLLRGIETSLGTHSSSSAFFYMSRCCVRALARHRKEKADSLWSYIHISLSETFCLGQLQMYEIALRLQSCIGRWINHVLLWLYLQ.

The 308-residue stretch at 148 to 455 folds into the Protein kinase domain; that stretch reads EFEKTPLGAA…GTHSSSSAFF (308 aa). ATP contacts are provided by residues 154-162 and Lys176; that span reads LGAASLAQV. Asp308 serves as the catalytic Proton acceptor.

The protein belongs to the protein kinase superfamily. ADCK protein kinase family.

It is found in the mitochondrion. Functionally, appears to be essential for maintaining mitochondrial cristae formation and mitochondrial function by acting via YME1L1 in a kinase-independent manner to regulate essential mitochondrial structural proteins OPA1 and IMMT. The action of this enzyme is not yet clear. It is not known if it has protein kinase activity and what type of substrate it would phosphorylate (Ser, Thr or Tyr). This Xenopus laevis (African clawed frog) protein is AarF domain-containing protein kinase 1 (adck1).